We begin with the raw amino-acid sequence, 95 residues long: Large ribosomal subunit protein uL23 (95 aa).

It belongs to the universal ribosomal protein uL23 family. As to quaternary structure, part of the 50S ribosomal subunit. Contacts protein L29, and trigger factor when it is bound to the ribosome.

Its function is as follows. One of the early assembly proteins it binds 23S rRNA. One of the proteins that surrounds the polypeptide exit tunnel on the outside of the ribosome. Forms the main docking site for trigger factor binding to the ribosome. This Heliobacterium modesticaldum (strain ATCC 51547 / Ice1) protein is Large ribosomal subunit protein uL23.